The following is a 227-amino-acid chain: C4-dicarboxylate TRAP transporter small permease protein DctQ (227 aa).

Topologically, residues 1–7 (MLRILDR) are cytoplasmic. The chain crosses the membrane as a helical span at residues 8–28 (AEEVLIAALIATATVLIFVSV). Residues 29–67 (THRFTLGFVADFVGFFRGHGMTGAAAAAKSLYTTLRGIN) lie on the Periplasmic side of the membrane. A helical membrane pass occupies residues 68-88 (LVWAQELCIILFVWMAKFGAA). At 89–112 (YGVRTGIHVGIDVLINRLDAPKRR) the chain is on the cytoplasmic side. The chain crosses the membrane as a helical span at residues 113–133 (FFILLGLGAGALFTGIIATLG). Residues 134 to 149 (ANFVLHMYHASSTSPD) lie on the Periplasmic side of the membrane. A helical membrane pass occupies residues 150-170 (LELPMWLVYLAIPMGSSLMCF). The Cytoplasmic segment spans residues 171-227 (RFLQVAFGFARTGELPHHDHGHVDGVDTENEGIDAEGDVLLHSPLTPRDLVEKPKDN).

It belongs to the TRAP transporter small permease family. As to quaternary structure, the complex comprises the extracytoplasmic solute receptor protein DctP, and the two transmembrane proteins DctQ and DctM.

It localises to the cell inner membrane. Part of the tripartite ATP-independent periplasmic (TRAP) transport system DctPQM involved in C4-dicarboxylates uptake. The sequence is that of C4-dicarboxylate TRAP transporter small permease protein DctQ from Rhodobacter capsulatus (Rhodopseudomonas capsulata).